We begin with the raw amino-acid sequence, 157 residues long: UPF0254 protein MTH_1148 (157 aa).

This sequence belongs to the UPF0254 family.

This chain is UPF0254 protein MTH_1148, found in Methanothermobacter thermautotrophicus (strain ATCC 29096 / DSM 1053 / JCM 10044 / NBRC 100330 / Delta H) (Methanobacterium thermoautotrophicum).